Consider the following 501-residue polypeptide: Mitochondrial inner membrane i-AAA protease supercomplex subunit MGR3 (501 aa).

The Mitochondrial matrix portion of the chain corresponds to 1-77 (MLLQGMRLSQ…PKPNLKKKNR (77 aa)). Residues 39–72 (RPPASNFNTQESAPIPESPANSPTRPQMAPKPNL) are disordered. A helical membrane pass occupies residues 78–95 (SLMYSIIGVSIVGLYFWF). At 96-501 (KSNSRKQKLP…LKAAKKEGLN (406 aa)) the chain is on the mitochondrial intermembrane side. TPR repeat units lie at residues 109-144 (QKVWKEAIWQESDKMDFNYKEALRRYIEALDECDRS), 154-187 (TRIELKIAEMYEKLNMLEEAQNLYQELLSRFFEA), 386-420 (GTYIKAVRFVRKNRDLCLERAQKCYDSVIAFAKRN), and 440-473 (ALSTYGMGVLSLHEGVLAKAEKLFKDSITMAKET).

Belongs to the MGR3 family. In terms of assembly, component of the mitochondrial inner membrane i-AAA protease supercomplex composed of MGR1, MGR3 and YME1. With MGR1, forms a subcomplex that binds to YME1 and to substrates to facilitate proteolysis.

The protein localises to the mitochondrion inner membrane. Its function is as follows. Component of the mitochondrial inner membrane i-AAA protease supercomplex, which degrades misfolded mitochondrial proteins. Together with MGR1, functions in an adapter complex that targets substrates to the i-AAA protease for degradation. Required for growth of cells lacking the mitochondrial genome. The sequence is that of Mitochondrial inner membrane i-AAA protease supercomplex subunit MGR3 (MGR3) from Saccharomyces cerevisiae (strain ATCC 204508 / S288c) (Baker's yeast).